The primary structure comprises 257 residues: Triosephosphate isomerase (257 aa).

Residues N12 and K14 each coordinate substrate. The Electrophile role is filled by H98. E169 (proton acceptor) is an active-site residue.

Belongs to the triosephosphate isomerase family. Homodimer.

The catalysed reaction is D-glyceraldehyde 3-phosphate = dihydroxyacetone phosphate. Its pathway is carbohydrate biosynthesis; gluconeogenesis. The protein operates within carbohydrate degradation; glycolysis; D-glyceraldehyde 3-phosphate from glycerone phosphate: step 1/1. In Dictyostelium discoideum (Social amoeba), this protein is Triosephosphate isomerase (tpiA).